A 482-amino-acid chain; its full sequence is tRNA sulfurtransferase (482 aa).

Residues 61–165 enclose the THUMP domain; it reads PAIRDALTRI…NDRLLLVKGR (105 aa). ATP-binding positions include 183-184, Lys-265, Gly-287, and Gln-296; that span reads LI. Residues Cys-344 and Cys-456 are joined by a disulfide bond. In terms of domain architecture, Rhodanese spans 404-482; the sequence is FGANDAILDI…GFSNVKVYRP (79 aa). Cys-456 (cysteine persulfide intermediate) is an active-site residue.

The protein belongs to the ThiI family.

It is found in the cytoplasm. The enzyme catalyses [ThiI sulfur-carrier protein]-S-sulfanyl-L-cysteine + a uridine in tRNA + 2 reduced [2Fe-2S]-[ferredoxin] + ATP + H(+) = [ThiI sulfur-carrier protein]-L-cysteine + a 4-thiouridine in tRNA + 2 oxidized [2Fe-2S]-[ferredoxin] + AMP + diphosphate. The catalysed reaction is [ThiS sulfur-carrier protein]-C-terminal Gly-Gly-AMP + S-sulfanyl-L-cysteinyl-[cysteine desulfurase] + AH2 = [ThiS sulfur-carrier protein]-C-terminal-Gly-aminoethanethioate + L-cysteinyl-[cysteine desulfurase] + A + AMP + 2 H(+). It functions in the pathway cofactor biosynthesis; thiamine diphosphate biosynthesis. In terms of biological role, catalyzes the ATP-dependent transfer of a sulfur to tRNA to produce 4-thiouridine in position 8 of tRNAs, which functions as a near-UV photosensor. Also catalyzes the transfer of sulfur to the sulfur carrier protein ThiS, forming ThiS-thiocarboxylate. This is a step in the synthesis of thiazole, in the thiamine biosynthesis pathway. The sulfur is donated as persulfide by IscS. The chain is tRNA sulfurtransferase from Klebsiella pneumoniae (strain 342).